A 324-amino-acid polypeptide reads, in one-letter code: MSQSFNRHRRLRTSKAMREMVKETRLHPSDFIYPIFVVEGLEGKKAVPSMPDVHHVSLDLLKDEVAELVKLGIQSVIVFGIPEEKDDCGTQAYHDHGIVQKAITEIKEHFPEMVVVADTCLCEYTDHGHCGLVKDGVILNDESLELLAQTAVSQAKAGADIIAPSNMMDGFVTVIREALDKEGFVNIPIMSYAVKYSSEFYGPFRDAANSTPQFGDRKTYQMDPANRMEALREAQSDVEEGADFLIVKPSLSYMDIMRDVKNEFTLPLVAYNVSGEYSMVKAAAQNGWIKEKEIVLEILTSMKRAGADLIITYHAKDAAKWLAE.

Zn(2+) is bound by residues C120, C122, and C130. K195 serves as the catalytic Schiff-base intermediate with substrate. Positions 205 and 217 each coordinate 5-aminolevulinate. Mg(2+) is bound at residue E233. K248 functions as the Schiff-base intermediate with substrate in the catalytic mechanism. Residues S274 and Y313 each coordinate 5-aminolevulinate.

The protein belongs to the ALAD family. In terms of assembly, homooctamer. Zn(2+) serves as cofactor.

The enzyme catalyses 2 5-aminolevulinate = porphobilinogen + 2 H2O + H(+). It participates in porphyrin-containing compound metabolism; protoporphyrin-IX biosynthesis; coproporphyrinogen-III from 5-aminolevulinate: step 1/4. Functionally, catalyzes an early step in the biosynthesis of tetrapyrroles. Binds two molecules of 5-aminolevulinate per subunit, each at a distinct site, and catalyzes their condensation to form porphobilinogen. This chain is Delta-aminolevulinic acid dehydratase (hemB), found in Bacillus subtilis (strain 168).